Consider the following 597-residue polypeptide: U3 small nucleolar RNA-associated protein 6 homolog (597 aa).

HAT repeat units lie at residues 121 to 153 (ATKT…WEME), 156 to 188 (LSSE…MELM), 304 to 335 (RKEE…FCLE), 488 to 520 (GGYK…FEKE), and 524 to 557 (CNMA…EELN).

It belongs to the UTP6 family. As to quaternary structure, part of the small subunit (SSU) processome, composed of more than 70 proteins and the RNA chaperone small nucleolar RNA (snoRNA) U3.

The protein resides in the nucleus. It is found in the nucleolus. Part of the small subunit (SSU) processome, first precursor of the small eukaryotic ribosomal subunit. During the assembly of the SSU processome in the nucleolus, many ribosome biogenesis factors, an RNA chaperone and ribosomal proteins associate with the nascent pre-rRNA and work in concert to generate RNA folding, modifications, rearrangements and cleavage as well as targeted degradation of pre-ribosomal RNA by the RNA exosome. Involved in nucleolar processing of pre-18S ribosomal RNA. This chain is U3 small nucleolar RNA-associated protein 6 homolog, found in Homo sapiens (Human).